Consider the following 237-residue polypeptide: Phosphoribosylaminoimidazole-succinocarboxamide synthase (237 aa).

It belongs to the SAICAR synthetase family.

The catalysed reaction is 5-amino-1-(5-phospho-D-ribosyl)imidazole-4-carboxylate + L-aspartate + ATP = (2S)-2-[5-amino-1-(5-phospho-beta-D-ribosyl)imidazole-4-carboxamido]succinate + ADP + phosphate + 2 H(+). Its pathway is purine metabolism; IMP biosynthesis via de novo pathway; 5-amino-1-(5-phospho-D-ribosyl)imidazole-4-carboxamide from 5-amino-1-(5-phospho-D-ribosyl)imidazole-4-carboxylate: step 1/2. In Salmonella agona (strain SL483), this protein is Phosphoribosylaminoimidazole-succinocarboxamide synthase.